A 430-amino-acid polypeptide reads, in one-letter code: Ethylene-responsive transcription factor WRI1 (430 aa).

A compositionally biased stretch (low complexity) spans 1–26 (MKKRLTTSTCSSSPSSSVSSSTTTSS). The segment at 1–66 (MKKRLTTSTC…PASTRRSSIY (66 aa)) is disordered. Positions 53 to 63 (NPTSPASTRRS) are enriched in polar residues. A DNA-binding region (AP2/ERF 1) is located at residues 65–131 (IYRGVTRHRW…WGPDTILNFP (67 aa)). Thr-70 is subject to Phosphothreonine; by KIN10. Ser-166 is modified (phosphoserine; by KIN10). The AP2/ERF 2 DNA-binding region spans 167–225 (KYRGVARHHHNGRWEARIGRVFGNKYLYLGTYNTQEEAAAAYDMAAIEYRGANAVTNFD). The span at 260-274 (VETREAKEEPREEVK) shows a compositional bias: basic and acidic residues. Disordered regions lie at residues 260–297 (VETR…EQQE) and 398–422 (SPPS…TTTT).

The protein belongs to the AP2/ERF transcription factor family. AP2 subfamily. As to quaternary structure, interacts with KIN10 and KIN11. Ubiquitinated. In terms of processing, the phosphorylation at Thr-70 and Ser-166 by KIN10 facilitates its degradation via the proteasomal pathway. In terms of tissue distribution, mostly expressed in siliques, especially in seeds. Also detected in roots and flowers, and, to a lower extent, in leaves stems and seedlings.

The protein resides in the nucleus. Its activity is regulated as follows. Down-regulated by KIN10 that controls its protein stability under a phosphorylation-dependent manner. Functionally, may be involved in the regulation of gene expression by stress factors and by components of stress signal transduction pathways. Transcriptional activator involved in the activation of a subset of sugar-responsive genes and the control of carbon flow from sucrose import to oil accumulation in developing seeds. Binds to the GCC-box pathogenesis-related promoter element. Promotes sugar uptake and seed oil accumulation by glycolysis. Required for embryo development, seed germination and, indirectly, for seedling establishment. Negative regulator of the ABA-mediated germination inhibition. The sequence is that of Ethylene-responsive transcription factor WRI1 (WRI1) from Arabidopsis thaliana (Mouse-ear cress).